We begin with the raw amino-acid sequence, 306 residues long: Recombination-associated protein RdgC (306 aa).

Belongs to the RdgC family.

The protein localises to the cytoplasm. It is found in the nucleoid. Its function is as follows. May be involved in recombination. The chain is Recombination-associated protein RdgC from Pseudomonas syringae pv. tomato (strain ATCC BAA-871 / DC3000).